Consider the following 543-residue polypeptide: Cytochrome P450 monooxygenase CYP1 (543 aa).

A helical membrane pass occupies residues 40–60; that stretch reads SSFFTRILIAFIGLCLLSIFS. N-linked (GlcNAc...) asparagine glycans are attached at residues N210 and N367. C478 is a heme binding site. N517 carries N-linked (GlcNAc...) asparagine glycosylation.

The protein belongs to the cytochrome P450 family. It depends on heme as a cofactor.

It localises to the membrane. It participates in secondary metabolite biosynthesis. Functionally, cytochrome P450 monooxygenase; part of the gene cluster that mediates the biosynthesis of a tyrosine-derived cytochalasan acting as a fungal signal recognized by resistant rice plants and leads to avirulence in Pi33 resistant rice cultivars. The first step in the pathway is catalyzed by the hybrid PKS-NRPS ACE1, assisted by the enoyl reductase RAP1, that are responsible for fusion of the tyrosine precursor and the polyketide backbone. The polyketide synthase module (PKS) of ACE1 is responsible for the synthesis of the polyketide backbone and the downstream nonribosomal peptide synthetase (NRPS) amidates the carboxyl end of the polyketide with the tyrosine precursor. Because ACE1 lacks a designated enoylreductase (ER) domain, the required activity is provided the enoyl reductase RAP1. Reduction by the hydrolyase ORFZ, followed by dehydration and intra-molecular Diels-Alder cyclization by the Diels-Alderase ORF3 then yield the required isoindolone-fused macrocycle. A number of oxidative steps catalyzed by the tailoring enzymes identified within the cluster, including cytochrome P450 monooxygenases CYP1 to CYP4, the FAD-linked oxidoreductase OXR2 and the short-chain dehydrogenase/reductase OXR1, are further required to afford the final cytochalasans that confer avirulence and which have still to be identified. The monooxygenase CYP1 has been shown to be a site-selective C-18 hydroxylase whereas the function of CYP3 is the site-selective epoxidation of the C-6/C-7 olefin that is present in some intermediate compounds. Finally, SYN2 and RAP2 are not required for avirulence in Pi33 resistant rice cultivars. This Pyricularia oryzae (strain 70-15 / ATCC MYA-4617 / FGSC 8958) (Rice blast fungus) protein is Cytochrome P450 monooxygenase CYP1.